We begin with the raw amino-acid sequence, 418 residues long: MRTKNEKSPLKAFMKQRRMGLNDFIQKIATNSSYACKHSEVQSILNISPPQEPELLNENSSPPPSPSQQINLGPSSNPHAKPSDFQFLKIIGKGSFGKVLLARHNADEKFYAVKVLQKKAILKKKEEKHIMSERNVLLKNVKHPFLVGLHFSFQTTSRLYFILDYINGGELFYHLQRERCFLEPRARFYAAEIASALGYLHSLNIVYRDLKPENILLDSQGHIILTDFGLCKENIEPNGTTSTFCGTPEYLAPEVLHKQPYDRTVDWWCLGAVLYEMLYGLPPFYSRNTAEMYDNILNKPLQLKPNITNSARNLLEGLLQKDRTKRIGAKNDFMEIKNHMFFSPINWDDLINKKITPPFNPNVSGPSDLQHFDPEFTEEPVPNSIGQSPDSILITASIKEAAEAFMGFSYAPPMESYL.

A disordered region spans residues Pro50–Pro78. Residues Gln68–Pro78 show a composition bias toward polar residues. In terms of domain architecture, Protein kinase spans Phe85–Phe342. Residues Ile91–Val99 and Lys114 each bind ATP. The active-site Proton acceptor is Asp209. Positions Ser343–Leu418 constitute an AGC-kinase C-terminal domain.

It belongs to the protein kinase superfamily. AGC Ser/Thr protein kinase family.

It localises to the cytoplasm. The protein resides in the nucleus. Its subcellular location is the endoplasmic reticulum. It carries out the reaction L-seryl-[protein] + ATP = O-phospho-L-seryl-[protein] + ADP + H(+). The catalysed reaction is L-threonyl-[protein] + ATP = O-phospho-L-threonyl-[protein] + ADP + H(+). Its function is as follows. Protein kinase that may play an important role in cellular stress response. Plays an important role in activating certain potassium, sodium, and chloride channels, suggesting an involvement in the regulation of processes such as cell survival, neuronal excitability, and renal sodium excretion. This is Serine/threonine-protein kinase Sgk1 (sgk1) from Xenopus tropicalis (Western clawed frog).